We begin with the raw amino-acid sequence, 101 residues long: Small ribosomal subunit protein bS18c (101 aa).

This sequence belongs to the bacterial ribosomal protein bS18 family. Part of the 30S ribosomal subunit.

It localises to the plastid. The protein resides in the chloroplast. This chain is Small ribosomal subunit protein bS18c, found in Lepidium virginicum (Virginia pepperweed).